The primary structure comprises 408 residues: Peptidase T (408 aa).

Position 81 (His81) interacts with Zn(2+). Asp83 is a catalytic residue. Asp142 lines the Zn(2+) pocket. Glu176 acts as the Proton acceptor in catalysis. Zn(2+) contacts are provided by Glu177, Asp199, and His381.

The protein belongs to the peptidase M20B family. Zn(2+) serves as cofactor.

It is found in the cytoplasm. The enzyme catalyses Release of the N-terminal residue from a tripeptide.. Its function is as follows. Cleaves the N-terminal amino acid of tripeptides. The chain is Peptidase T from Streptococcus gordonii (strain Challis / ATCC 35105 / BCRC 15272 / CH1 / DL1 / V288).